Reading from the N-terminus, the 236-residue chain is Pyridoxine 5'-phosphate synthase (236 aa).

Position 7 (Asn7) interacts with 3-amino-2-oxopropyl phosphate. 1-deoxy-D-xylulose 5-phosphate is bound at residue 9–10 (DH). A 3-amino-2-oxopropyl phosphate-binding site is contributed by Arg18. Catalysis depends on His43, which acts as the Proton acceptor. Positions 45 and 50 each coordinate 1-deoxy-D-xylulose 5-phosphate. Residue Glu69 is the Proton acceptor of the active site. A 1-deoxy-D-xylulose 5-phosphate-binding site is contributed by Thr99. His190 (proton donor) is an active-site residue. 3-amino-2-oxopropyl phosphate contacts are provided by residues Gly191 and 212–213 (GH).

It belongs to the PNP synthase family. Homooctamer; tetramer of dimers.

The protein localises to the cytoplasm. The enzyme catalyses 3-amino-2-oxopropyl phosphate + 1-deoxy-D-xylulose 5-phosphate = pyridoxine 5'-phosphate + phosphate + 2 H2O + H(+). The protein operates within cofactor biosynthesis; pyridoxine 5'-phosphate biosynthesis; pyridoxine 5'-phosphate from D-erythrose 4-phosphate: step 5/5. Functionally, catalyzes the complicated ring closure reaction between the two acyclic compounds 1-deoxy-D-xylulose-5-phosphate (DXP) and 3-amino-2-oxopropyl phosphate (1-amino-acetone-3-phosphate or AAP) to form pyridoxine 5'-phosphate (PNP) and inorganic phosphate. The polypeptide is Pyridoxine 5'-phosphate synthase (Desulfosudis oleivorans (strain DSM 6200 / JCM 39069 / Hxd3) (Desulfococcus oleovorans)).